A 314-amino-acid chain; its full sequence is Pyridoxal 5'-phosphate synthase-like subunit PDX1.2 (314 aa).

N-acetylalanine is present on alanine 2.

Belongs to the PdxS/SNZ family. As to quaternary structure, homodimer or heterodimer with PDX1.1 or PDX1.3. No interaction with PDX2. Expressed in callus tissues, flowers and roots. Weakly expressed in leaves and stems.

The protein resides in the cytoplasm. The protein has no function in the formation of pyridoxal 5'-phosphate. In Arabidopsis thaliana (Mouse-ear cress), this protein is Pyridoxal 5'-phosphate synthase-like subunit PDX1.2 (PDX12).